We begin with the raw amino-acid sequence, 526 residues long: MIAMPLHRALLKNFLGYAPDWYKLTIFGFLLINPLLFYFVSPFWAGWLLVVEFIFTLGMALKCYPLQPGGLLALQAILIGMTSPQQVWHEVTGNIEVLMLLVFMVAGIYFMKQLLLFVFTKLLLRIHSKPLLSLAFCMAAAFLSAFLDALTVIAVIISVAIGFYGIYHRFASQQGEDEADISDDSALNGEEHHRTLDQFRAFLRSLMMHAGVGTALGGVMTMVGEPQNLIIAKSAGWDFVDFFLRMSPVTVPVFICGILTCVLVERFKLFGYGVNLPDNVRRVLEDYDRDMTEKRTQQDKVRLLVQAVIGVWLIIALAFHLAEVGLIGLSVIIMATTFCGVTEEHAIGKAFQDAMPFTALLTVFFAIVAVIIDQQLFSPIIHYVLQSSDSAQLTQFYLFNGLLSSISDNVFVGSVYINEARNAFESGKISLPQFELLAVAINTGTNLPSVATPNGQAAFLFLLTSSLAPLIRLSYGRMVIMALPYTIVMTLVGLLCVEFTLVPFTDFLMNNHWISLPNLTISGSHA.

13 consecutive transmembrane segments (helical) span residues 14 to 34, 35 to 55, 99 to 119, 122 to 142, 146 to 166, 206 to 226, 239 to 259, 307 to 327, 328 to 348, 357 to 377, 397 to 417, 451 to 471, and 479 to 499; these read FLGY…LINP, LLFY…EFIF, MLLV…LFVF, LLLR…AAAF, FLDA…FYGI, LMMH…VGEP, FVDF…CGIL, AVIG…VGLI, GLSV…HAIG, FTAL…QQLF, YLFN…SVYI, ATPN…APLI, and VIMA…CVEF.

This sequence belongs to the NhaB Na(+)/H(+) (TC 2.A.34) antiporter family.

It is found in the cell inner membrane. The catalysed reaction is 2 Na(+)(in) + 3 H(+)(out) = 2 Na(+)(out) + 3 H(+)(in). In terms of biological role, na(+)/H(+) antiporter that extrudes sodium in exchange for external protons. This Pectobacterium atrosepticum (strain SCRI 1043 / ATCC BAA-672) (Erwinia carotovora subsp. atroseptica) protein is Na(+)/H(+) antiporter NhaB.